The following is a 565-amino-acid chain: Bicyclogermacrene synthase (565 aa).

Mg(2+) contacts are provided by D317, D321, D461, and E469. A DDXXD motif motif is present at residues 317–321 (DDTFD).

This sequence belongs to the terpene synthase family. Mg(2+) is required as a cofactor.

It carries out the reaction (2E,6E)-farnesyl diphosphate = bicyclogermacrene + diphosphate. Its pathway is secondary metabolite biosynthesis; terpenoid biosynthesis. Functionally, sesquiterpene synthase converting farnesyl diphosphate to bicyclogermacrene as the major product. This is Bicyclogermacrene synthase from Phyla dulcis (Aztec sweet herb).